The sequence spans 545 residues: Coiled-coil domain-containing protein 60 (545 aa).

Residues 72-99 are a coiled coil; the sequence is NILREENAMKKKQQLLQKLKEEELNKFQ. A disordered region spans residues 224–284; it reads PAIRTAMASR…DNESSSTKPE (61 aa). Residues 238-259 show a composition bias toward low complexity; that stretch reads RGSTLSLTRTSGGSSPQSSMMS.

This Mus musculus (Mouse) protein is Coiled-coil domain-containing protein 60 (Ccdc60).